A 474-amino-acid chain; its full sequence is Phenylalanine--tRNA ligase alpha subunit (474 aa).

L-phenylalanine is bound by residues T317, 356 to 358 (QLE), and Y396. A Mg(2+)-binding site is contributed by E398. F421 contributes to the L-phenylalanine binding site.

This sequence belongs to the class-II aminoacyl-tRNA synthetase family. Phe-tRNA synthetase alpha subunit type 2 subfamily. Tetramer of two alpha and two beta subunits. It depends on Mg(2+) as a cofactor.

The protein localises to the cytoplasm. The catalysed reaction is tRNA(Phe) + L-phenylalanine + ATP = L-phenylalanyl-tRNA(Phe) + AMP + diphosphate + H(+). The polypeptide is Phenylalanine--tRNA ligase alpha subunit (Methanocorpusculum labreanum (strain ATCC 43576 / DSM 4855 / Z)).